The primary structure comprises 1533 residues: Glycogen debranching enzyme (1533 aa).

At Ser-64 the chain carries Phosphoserine. Active-site residues include Asp-527, His-530, and Asp-628.

Belongs to the glycogen debranching enzyme family. Monomer. Interacts with NHLRC1/malin. Post-translationally, ubiquitinated.

Its subcellular location is the cytoplasm. The catalysed reaction is Transfers a segment of a (1-&gt;4)-alpha-D-glucan to a new position in an acceptor, which may be glucose or a (1-&gt;4)-alpha-D-glucan.. The enzyme catalyses Hydrolysis of (1-&gt;6)-alpha-D-glucosidic branch linkages in glycogen phosphorylase limit dextrin.. In terms of biological role, multifunctional enzyme acting as 1,4-alpha-D-glucan:1,4-alpha-D-glucan 4-alpha-D-glycosyltransferase and amylo-1,6-glucosidase in glycogen degradation. The polypeptide is Glycogen debranching enzyme (AGL) (Canis lupus familiaris (Dog)).